The following is a 176-amino-acid chain: HTH-type transcriptional regulator DctR (176 aa).

The HTH luxR-type domain occupies 109–174 (VPEAAVSLSR…ELVRHQHIDY (66 aa)). Positions 133 to 152 (TEDILEKLKISLKTFYCHKH) form a DNA-binding region, H-T-H motif.

Its function is as follows. May act as a transcriptional regulator of dctA. The polypeptide is HTH-type transcriptional regulator DctR (dctR) (Escherichia coli (strain K12)).